The primary structure comprises 413 residues: Probable protein S-acyltransferase 3 (413 aa).

2 helical membrane-spanning segments follow: residues Leu-65–Ile-85 and Val-96–Ala-116. The DHHC domain occupies Lys-171–Ser-221. Residue Cys-201 is the S-palmitoyl cysteine intermediate of the active site. Transmembrane regions (helical) follow at residues Phe-216 to Ile-236 and Ser-255 to Phe-275. The segment at Arg-364–Lys-413 is disordered. A compositionally biased stretch (basic and acidic residues) spans Asn-376 to Pro-402. Polar residues predominate over residues Phe-404–Lys-413.

It belongs to the DHHC palmitoyltransferase family. In terms of tissue distribution, expressed in flowers and pollen.

The protein resides in the endoplasmic reticulum membrane. It is found in the cytoplasmic vesicle membrane. The enzyme catalyses L-cysteinyl-[protein] + hexadecanoyl-CoA = S-hexadecanoyl-L-cysteinyl-[protein] + CoA. Functionally, palmitoyl acyltransferase. The chain is Probable protein S-acyltransferase 3 (PAT03) from Arabidopsis thaliana (Mouse-ear cress).